Here is a 1391-residue protein sequence, read N- to C-terminus: MEVLMAERADLVFHNKVIDGTAMKRLISRLIDHFGMAYTSHILDQVKTLGFQQATATSISLGIDDLLTTPSKRWLVQDAEQQSFILEKHHHYGNVHAVEKLRQSIEIWYATSEYLRQEMNTNFRMTDPSNPVHIMSFSGARGNPSQVHQLVGMRGLMSDPQGQMIDLPIQSNLREGLSLTEYIISCYGARKGVVDTAVRTSDAGYLTRRLVEVVQHIVVRRTDCGTIRGIYVTSRNGMMTERIFIQTLIGRVLADDIYMGPRCIATRNQDVGIELVNRFITFRAQPISIRTPFTCRSTSWICRLCYGRSPTHGDLVELGEAVGIIAGQSIGEPGTQLTLRTFHTGGVFTGGTAEHVRAPFNGKIKFNEDLVHPTRTRHGHPAFLCYIDLYVTIESQDIIHNVNIPQKSFLLVQNNQYVESEQVIAEIRAETSTFNFKERVRKHIYSDSEGEMHWSTDVYHAPEYTYGNVHLLPKTSHLWVLSGGPCRSRIVPFSLHKDQDQMNVHSLSAERRYISNLSATNDQVRHKLFSSDPSGKRGGSILDYSGPNRIICNGHLNFIYPTILHENSDLLAKRRRNRFILPLQSNQEREKELMPCSGISIEIPINGIFRRNSILAYFDDPLYRRKSSGITKYGTIEVHSIVKKEDLIEYRGAKEFRSKYQMKVDRFFFIPEEVHILPGSSYIMVRNNSIIGVDTRITLNIRSRVGGLVRVERKKKNIELKIFSGDIHFPGETDKISRHSGILIPPGTEKKKSKESKKKLKNWIYVQRITPTKKKYFVLVRPVVTYEIADGINLVTLFPQDLLQERDDVQLRVVNYILYENGKPIRGISDTSIQLVRTCLVLNCDQYKNGSSMEEIHASFVEVRTNGLIRYFLRMDLVKSPISYIVKRNDPSSSGLIPDNGSDRNNINPFYSIYYKARIQQSLSQHQGTIRTLLNRNKECQSLIILSSSNCSRMHPFNGLKYHNVTKESSKGDPLIPIKNWLGPLGTVPKIANFYSFYHLITHNQILVNKYLILNNLKQIFQVLKYYLMDENGRIYNPDRCRNIIFNPFNFNWYFLHHDYCEETSTIISPGQFICENVCISKNGPHLKSGQVLIVHIDSLVIRSAKPYLATPGATVHGHYGEILYEGDTLVTFIYEKSRSGDITQGLPKVEQVLEVRSIDSISMNLEKRVEGWNERIPRILGIPWGFLIGAELTIAQSRISLVNKIQKVYRSQGVQIHNRHIEIIVRQITSKVLVSEEGMSNVFSPGELIGLLRAERTGRALEEAICYRAVLLGITRASLNTQSFISEASFQETARVLAKAALRGRIDWLKGLKENVVLGGLIPVGTGFKVLVHRSRQHNNIPLETKKKNIFEGEMRDILFHHRKFKLLNYCIPKNFHDTPEQSFTGFNDS.

The Zn(2+) site is built by cysteine 224, cysteine 295, cysteine 302, and cysteine 305.

This sequence belongs to the RNA polymerase beta' chain family. RpoC2 subfamily. As to quaternary structure, in plastids the minimal PEP RNA polymerase catalytic core is composed of four subunits: alpha, beta, beta', and beta''. When a (nuclear-encoded) sigma factor is associated with the core the holoenzyme is formed, which can initiate transcription. Zn(2+) serves as cofactor.

The protein resides in the plastid. The protein localises to the chloroplast. It carries out the reaction RNA(n) + a ribonucleoside 5'-triphosphate = RNA(n+1) + diphosphate. Functionally, DNA-dependent RNA polymerase catalyzes the transcription of DNA into RNA using the four ribonucleoside triphosphates as substrates. The polypeptide is DNA-directed RNA polymerase subunit beta'' (Buxus microphylla (Littleleaf boxwood)).